The primary structure comprises 110 residues: MTELMRIAALFAATALAEIVGCYLPWLVLKEGRPVWLLVPAALSLALFAWLLTLHPSAAGRTYAAYGGVYIAVALVWLRVVDGVALTRWDVAGAVLALGGMAVIALQPRA.

4 consecutive transmembrane segments (helical) span residues 9 to 29, 34 to 54, 66 to 86, and 88 to 108; these read ALFA…WLVL, PVWL…LLTL, YGGV…GVAL, and RWDV…ALQP.

The protein belongs to the UPF0060 family.

It localises to the cell inner membrane. The chain is UPF0060 membrane protein Bcep18194_A4425 from Burkholderia lata (strain ATCC 17760 / DSM 23089 / LMG 22485 / NCIMB 9086 / R18194 / 383).